A 71-amino-acid chain; its full sequence is Small ribosomal subunit protein bS18 (71 aa).

This sequence belongs to the bacterial ribosomal protein bS18 family. As to quaternary structure, part of the 30S ribosomal subunit. Forms a tight heterodimer with protein bS6.

Binds as a heterodimer with protein bS6 to the central domain of the 16S rRNA, where it helps stabilize the platform of the 30S subunit. The sequence is that of Small ribosomal subunit protein bS18 from Acaryochloris marina (strain MBIC 11017).